The following is a 170-amino-acid chain: Cysteine-rich venom protein VAR4 (170 aa).

Residues 1–22 (MILLKLYLTLAAILCQSRGTTS) form the signal peptide. The region spanning 41–169 (NKHNDLRRTV…PLKYFLVCQY (129 aa)) is the SCP domain. 3 disulfides stabilise this stretch: Cys-77/Cys-156, Cys-95/Cys-170, and Cys-151/Cys-167.

It belongs to the CRISP family. Contains 8 disulfide bonds. Expressed by the venom gland.

The protein localises to the secreted. Its function is as follows. Blocks ryanodine receptors, and potassium channels. The protein is Cysteine-rich venom protein VAR4 of Varanus acanthurus (Ridge-tailed monitor).